Here is a 493-residue protein sequence, read N- to C-terminus: Monodehydroascorbate reductase, chloroplastic/mitochondrial (493 aa).

The N-terminal 51 residues, 1 to 51 (MSAVRRVMALASTTLPTKSGLSLWCPSSPSLARRFPARFSPIGSRIASRSL), are a transit peptide targeting the chloroplast and mitochondrion. Residues 68–71 (GGNA), Glu95, Arg102, Lys107, and 201–202 (RE) each bind FAD. NAD(+)-binding positions include 224–230 (GGYIGME), Glu248, Arg254, and Gly313. 226-230 (YIGME) is an NADP(+) binding site. NADP(+)-binding residues include Arg254 and Gly313. Asp351 is a binding site for FAD. 367-368 (EH) serves as a coordination point for NAD(+). Residue 367–368 (EH) coordinates NADP(+). Val369 serves as a coordination point for FAD. Arg373 is an L-ascorbate binding site. Tyr398 is a binding site for FAD. Tyr398 is a binding site for NAD(+). Residue Tyr398 participates in NADP(+) binding. Residue Arg400 coordinates L-ascorbate.

The protein belongs to the FAD-dependent oxidoreductase family. In terms of assembly, interacts in vitro with TRXy. The cofactor is FAD.

The protein resides in the plastid. It is found in the chloroplast. Its subcellular location is the mitochondrion. The catalysed reaction is 2 monodehydro-L-ascorbate radical + NADH + H(+) = 2 L-ascorbate + NAD(+). It carries out the reaction 2,4,6-trinitrotoluene + NADH = 2,4,6-trinitrotoluene radical + e(-) + NAD(+). With respect to regulation, redox regulation of the activity by thioredoxin TRXy1. Functionally, catalyzes the conversion of monodehydroascorbate (MDA) to ascorbate, oxidizing NADH in the process. Mediates phytotoxicity of 2,4,6-trinitrotoluene (TNT), an explosive and environmental pollutant, by reducing TNT and forming a nitro radical that spontaneously reacts with atmospheric oxygen, generating reactive superoxide. Can also use 1-chloro-2,4-dinitrobenzene (CDNB) as substrate, but not 1-chloro-4-nitrobenzene (CNB). The chain is Monodehydroascorbate reductase, chloroplastic/mitochondrial from Arabidopsis thaliana (Mouse-ear cress).